A 163-amino-acid polypeptide reads, in one-letter code: Phosphopantetheine adenylyltransferase (163 aa).

Position 9 (Ser9) interacts with substrate. Residues 9–10 (SF) and His17 each bind ATP. Residues Lys41, Thr73, and Arg87 each coordinate substrate. ATP contacts are provided by residues 88 to 90 (GLR), Glu98, and 123 to 129 (YAYFSSS).

It belongs to the bacterial CoaD family. As to quaternary structure, homohexamer. Mg(2+) is required as a cofactor.

The protein resides in the cytoplasm. The enzyme catalyses (R)-4'-phosphopantetheine + ATP + H(+) = 3'-dephospho-CoA + diphosphate. The protein operates within cofactor biosynthesis; coenzyme A biosynthesis; CoA from (R)-pantothenate: step 4/5. In terms of biological role, reversibly transfers an adenylyl group from ATP to 4'-phosphopantetheine, yielding dephospho-CoA (dPCoA) and pyrophosphate. In Lactiplantibacillus plantarum (strain ATCC BAA-793 / NCIMB 8826 / WCFS1) (Lactobacillus plantarum), this protein is Phosphopantetheine adenylyltransferase.